The sequence spans 429 residues: Probable M18 family aminopeptidase 2 (429 aa).

Zn(2+)-binding residues include histidine 82, histidine 156, and histidine 401.

This sequence belongs to the peptidase M18 family. Requires Zn(2+) as cofactor.

This is Probable M18 family aminopeptidase 2 from Pseudomonas aeruginosa (strain LESB58).